The following is a 731-amino-acid chain: MAAEEQPLLGRDRGSGQVHSGAAADQELCIDQAVVFIEDAIKYRSIYHRMDAGSLWLYRWYYSNVCQRVLGFIIFLILILAFVEVPSSFTKTADVRYRSQPWQPPCGLTETIEAFCLLAFLVDLSVKGYLVGQAQLQQNLWLLAYFMVLVVSVVDWIVSLSLACEEPLRMRRLLRPFFLLQNSSMMKKTLKCIRWSLPEMASVGLLLAIHLCLFTIIGMLLFTIGEKDEAQDQERLAYFRNLPEALTSLLVLLTTSNNPDVMIPAYTQNRAFALFFIVFTLIGSLFLMNLLTAIIYNQFRGYLMKSLQTSLFRRRLGARAAYEVLASRAGPAGTTPELVGVNPETFLPVLQKTQLNKTHKQAIMQKVQSYEGRPMLADEFQKLFDEVDKGLAKERPLKPQYQSPFLQTAQFIFSHHYFDYLGNLVALGNLLSICVFLVLDSDLLPGERDDFVLGILDYIFILYYLLELLFKVFALGLPGYLSYHSNVFDGLLTIILLVSEICTLAVYRLPHSGWKPEQYGPLSLWDMTRLMNTLIVFRFLRIIPNIKPMAEVANTILGLIPNLRAFGGILVVAYYVFAMIGINLFRGVIVPPGNSSLVPDNNSAVCGSFEQLGYWPNNFDDFAAALITLWNVMVVNNWQVILEAYKRYAGPWSMVYFVLWWLVSSVIWINLFLALLLENFLHRWDPQGHKQLLVGTKQMSVELMFRDILEEPKEEELMEKLHKHPHLHLCR.

The Cytoplasmic portion of the chain corresponds to 1 to 68 (MAAEEQPLLG…RWYYSNVCQR (68 aa)). A helical membrane pass occupies residues 69-89 (VLGFIIFLILILAFVEVPSSF). The Extracellular segment spans residues 90 to 111 (TKTADVRYRSQPWQPPCGLTET). A helical membrane pass occupies residues 112–132 (IEAFCLLAFLVDLSVKGYLVG). The Cytoplasmic portion of the chain corresponds to 133–139 (QAQLQQN). The chain crosses the membrane as a helical span at residues 140–160 (LWLLAYFMVLVVSVVDWIVSL). The Extracellular segment spans residues 161–167 (SLACEEP). The chain crosses the membrane as a helical span at residues 168–188 (LRMRRLLRPFFLLQNSSMMKK). An interaction with phosphatidylinositol 3,5-bisphosphate region spans residues 187–191 (KKTLK). Residues 189–203 (TLKCIRWSLPEMASV) lie on the Cytoplasmic side of the membrane. Residues 204-224 (GLLLAIHLCLFTIIGMLLFTI) form a helical membrane-spanning segment. At 225 to 238 (GEKDEAQDQERLAY) the chain is on the extracellular side. The helical; Pore-forming intramembrane region spans 239–263 (FRNLPEALTSLLVLLTTSNNPDVMI). The Extracellular segment spans residues 264-270 (PAYTQNR). A helical membrane pass occupies residues 271-291 (AFALFFIVFTLIGSLFLMNLL). At 292–417 (TAIIYNQFRG…TAQFIFSHHY (126 aa)) the chain is on the cytoplasmic side. Residues 418–438 (FDYLGNLVALGNLLSICVFLV) traverse the membrane as a helical segment. Residues 439–449 (LDSDLLPGERD) lie on the Extracellular side of the membrane. The helical transmembrane segment at 450–470 (DFVLGILDYIFILYYLLELLF) threads the bilayer. Over 471 to 486 (KVFALGLPGYLSYHSN) the chain is Cytoplasmic. A helical membrane pass occupies residues 487–507 (VFDGLLTIILLVSEICTLAVY). Over 508–524 (RLPHSGWKPEQYGPLSL) the chain is Extracellular. The chain crosses the membrane as a helical span at residues 525-542 (WDMTRLMNTLIVFRFLRI). The Cytoplasmic portion of the chain corresponds to 543–564 (IPNIKPMAEVANTILGLIPNLR). A helical transmembrane segment spans residues 565–585 (AFGGILVVAYYVFAMIGINLF). The Extracellular portion of the chain corresponds to 586–618 (RGVIVPPGNSSLVPDNNSAVCGSFEQLGYWPNN). Residues Asn-594 and Asn-601 are each glycosylated (N-linked (GlcNAc...) asparagine). The segment at residues 619 to 641 (FDDFAAALITLWNVMVVNNWQVI) is an intramembrane region (helical; Pore-forming). The Extracellular segment spans residues 642–656 (LEAYKRYAGPWSMVY). Residues 657–677 (FVLWWLVSSVIWINLFLALLL) form a helical membrane-spanning segment. Residues 678–731 (ENFLHRWDPQGHKQLLVGTKQMSVELMFRDILEEPKEEELMEKLHKHPHLHLCR) lie on the Cytoplasmic side of the membrane.

It belongs to the calcium channel alpha-1 subunit (TC 1.A.1.11) family. Two pore calcium channel subfamily. Homodimer. Interacts with LRRK2. Interacts with HAX1. Interacts with MTOR; the interaction is required for TPCN2 ATP sensitivity. Found in a complex with LSM12, TPCN1 and TPCN2. Interacts with LSM12. In terms of processing, N-glycosylated. Widely expressed. Highly expressed in macrophages. Expressed in pigmented cells.

It localises to the late endosome membrane. The protein localises to the lysosome membrane. Its subcellular location is the melanosome membrane. The catalysed reaction is Ca(2+)(in) = Ca(2+)(out). It carries out the reaction Na(+)(in) = Na(+)(out). With respect to regulation, regulated by Mg(2+) ions, cytosolic Mg(2+) selectively inhibits outward current while lysosomal Mg(2+) modestly inhibits both the outward and inward currents. In the absence of Mg(2+), NAADP readily activates TPCN2, with properties similar to PI(3,5)P2. Na(+) current is inhibited by ATP in a MTORC-dependent manner. ATP sensitivity is independent of PI(3,5)P2. Both current elicited by PI(3,5)P2 as well as NAADP are inhibited by tetrandrine. In terms of biological role, intracellular channel initially characterized as a non-selective Ca(2+)-permeable channel activated by NAADP (nicotinic acid adenine dinucleotide phosphate), it is also a highly-selective Na(+) channel activated directly by PI(3,5)P2 (phosphatidylinositol 3,5-bisphosphate). Localizes to the lysosomal and late endosome membranes where it regulates organellar membrane excitability, membrane trafficking, and pH homeostasis. Is associated with a plethora of physiological processes, including mTOR-dependent nutrient sensing, skin pigmentation and autophagy. Ion selectivity is not fixed but rather agonist-dependent and under defined ionic conditions, can be readily activated by both NAADP and PI(3,5)P2. As calcium channel, it increases the pH in the lysosomal lumen, as sodium channel, it promotes lysosomal exocytosis. Plays a crucial role in endolysosomal trafficking in the endolysosomal degradation pathway and is potentially involved in the homeostatic control of many macromolecules and cell metabolites. Also expressed in melanosomes of pigmented cells where mediates a Ca(2+) channel and/or PI(3,5)P2-activated melanosomal Na(+) channel to acidify pH and inhibit tyrosinase activity required for melanogenesis and pigmentation. Unlike the voltage-dependent TPCN1, TPCN2 is voltage independent and can be activated solely by PI(3,5)P2 binding. In contrast, PI(4,5)P2, PI(3,4)P2, PI(3)P and PI(5)P have no obvious effect on channel activation. (Microbial infection) During Ebola virus (EBOV) infection, controls the movement of endosomes containing virus particles and is required by EBOV to escape from the endosomal network into the cell cytoplasm. The polypeptide is Two pore channel protein 2 (Mus musculus (Mouse)).